Consider the following 81-residue polypeptide: Photosystem I iron-sulfur center (81 aa).

4Fe-4S ferredoxin-type domains are found at residues 2-31 (SHAVKIYDTCIGCTQCVRACPLDVLEMVPW) and 37-68 (GQIASSPRTEDCVGCKRCETACPTDFLSIRVY). Cys11, Cys14, Cys17, Cys21, Cys48, Cys51, Cys54, and Cys58 together coordinate [4Fe-4S] cluster.

In terms of assembly, the cyanobacterial PSI reaction center is composed of one copy each of PsaA,B,C,D,E,F,I,J,K,L,M and X, and forms trimeric complexes. Requires [4Fe-4S] cluster as cofactor.

It is found in the cellular thylakoid membrane. It catalyses the reaction reduced [plastocyanin] + hnu + oxidized [2Fe-2S]-[ferredoxin] = oxidized [plastocyanin] + reduced [2Fe-2S]-[ferredoxin]. Its function is as follows. Apoprotein for the two 4Fe-4S centers FA and FB of photosystem I (PSI); essential for photochemical activity. FB is the terminal electron acceptor of PSI, donating electrons to ferredoxin. The C-terminus interacts with PsaA/B/D and helps assemble the protein into the PSI complex. Required for binding of PsaD and PsaE to PSI. PSI is a plastocyanin/cytochrome c6-ferredoxin oxidoreductase, converting photonic excitation into a charge separation, which transfers an electron from the donor P700 chlorophyll pair to the spectroscopically characterized acceptors A0, A1, FX, FA and FB in turn. The chain is Photosystem I iron-sulfur center from Synechococcus sp. (strain WH8103).